A 204-amino-acid chain; its full sequence is Cell wall protein RHD3 (204 aa).

An N-terminal signal peptide occupies residues 1 to 15; sequence MKFLAILSLSSSALA. The GPI-anchor amidated glycine moiety is linked to residue glycine 182. The propeptide at 183 to 204 is removed in mature form; that stretch reads AAGQNKLSYGVGMAAVVAGLVM.

The protein belongs to the SRP1/TIP1 family. The GPI-anchor is attached to the protein in the endoplasmic reticulum and serves to target the protein to the cell surface. There, the glucosamine-inositol phospholipid moiety is cleaved off and the GPI-modified mannoprotein is covalently attached via its lipidless GPI glycan remnant to the 1,6-beta-glucan of the outer cell wall layer. Post-translationally, O-glycosylated by PMT1.

It is found in the secreted. The protein resides in the cell wall. The protein localises to the membrane. In terms of biological role, component of the cell wall involved in virulence. Does not seem to have a major role in maintaining cell wall integrity but plays a role in the relationship between C.albicans and the host. In Candida albicans (strain SC5314 / ATCC MYA-2876) (Yeast), this protein is Cell wall protein RHD3 (RHD3).